The chain runs to 103 residues: Small ribosomal subunit protein uS10 (103 aa).

Belongs to the universal ribosomal protein uS10 family. Part of the 30S ribosomal subunit.

In terms of biological role, involved in the binding of tRNA to the ribosomes. This is Small ribosomal subunit protein uS10 from Acinetobacter baylyi (strain ATCC 33305 / BD413 / ADP1).